A 461-amino-acid chain; its full sequence is Photosystem II CP43 reaction center protein (461 aa).

The propeptide occupies M1–E2. T3 carries the post-translational modification N-acetylthreonine. Phosphothreonine is present on T3. A run of 5 helical transmembrane segments spans residues L57–A81, L122–N143, K166–T188, K243–S263, and W279–A300. E355 provides a ligand contact to [CaMn4O5] cluster. A helical membrane pass occupies residues R435–P459.

This sequence belongs to the PsbB/PsbC family. PsbC subfamily. In terms of assembly, PSII is composed of 1 copy each of membrane proteins PsbA, PsbB, PsbC, PsbD, PsbE, PsbF, PsbH, PsbI, PsbJ, PsbK, PsbL, PsbM, PsbT, PsbX, PsbY, PsbZ, Psb30/Ycf12, at least 3 peripheral proteins of the oxygen-evolving complex and a large number of cofactors. It forms dimeric complexes. Binds multiple chlorophylls and provides some of the ligands for the Ca-4Mn-5O cluster of the oxygen-evolving complex. It may also provide a ligand for a Cl- that is required for oxygen evolution. PSII binds additional chlorophylls, carotenoids and specific lipids. serves as cofactor.

Its subcellular location is the plastid. The protein resides in the chloroplast thylakoid membrane. Functionally, one of the components of the core complex of photosystem II (PSII). It binds chlorophyll and helps catalyze the primary light-induced photochemical processes of PSII. PSII is a light-driven water:plastoquinone oxidoreductase, using light energy to abstract electrons from H(2)O, generating O(2) and a proton gradient subsequently used for ATP formation. The sequence is that of Photosystem II CP43 reaction center protein from Lotus japonicus (Lotus corniculatus var. japonicus).